The sequence spans 347 residues: MIPLRKNIARMAGYVPGYQPEDPAAYIKLNTNENAYPPSPKVLEAIMAEVGEGLRRYPDAASRAGREAAARLYGFLPEWIVMANGSDEVLNNLIRAFADEGDEIAYVYPSYSYYATLAEIQGARVKTYGLTDDWKLANFPERYDGKIFFLTNPNAPYGFTFSREFIEELAGRVAGMLVVDETYADFAGDTALDLVRKYENVVVTRTLSKSYSLAGMRLGLAVARPEVIAALDKIRDHYNLDRLAQAAAVAALGDQDYFREAVRKICETRDWFSAELRKLRYSVIPSSGNYVFTTPPDRDGARVYQGLFDRKILVRHFSDPNLAHGLRISIGTREEMEKTMEALREIG.

Lysine 209 is subject to N6-(pyridoxal phosphate)lysine.

This sequence belongs to the class-II pyridoxal-phosphate-dependent aminotransferase family. Histidinol-phosphate aminotransferase subfamily. Homodimer. Requires pyridoxal 5'-phosphate as cofactor.

The enzyme catalyses L-histidinol phosphate + 2-oxoglutarate = 3-(imidazol-4-yl)-2-oxopropyl phosphate + L-glutamate. The protein operates within amino-acid biosynthesis; L-histidine biosynthesis; L-histidine from 5-phospho-alpha-D-ribose 1-diphosphate: step 7/9. The protein is Histidinol-phosphate aminotransferase of Geotalea uraniireducens (strain Rf4) (Geobacter uraniireducens).